The primary structure comprises 888 residues: CRISPR-associated endonuclease/helicase Cas3 (888 aa).

The 212-residue stretch at 20–231 (KGNDIHLLIY…AGFCSLADWL (212 aa)) folds into the HD Cas3-type domain. Mg(2+) is bound by residues Asp75 and His160. One can recognise a Helicase ATP-binding domain in the interval 301–504 (DALPVAPGLT…LDTYGLHTDP (204 aa)). 314-321 (APTGSGKT) serves as a coordination point for ATP. The DEAH box signature appears at 452–455 (DEVH). Positions 556–735 (MLERMIAAAN…AYRQWLDSIY (180 aa)) constitute a Helicase C-terminal domain.

The protein in the N-terminal section; belongs to the CRISPR-associated nuclease Cas3-HD family. This sequence in the central section; belongs to the CRISPR-associated helicase Cas3 family. Interacts with the CasA subunit of Cascade once Cascade has recognized target DNA. Mg(2+) serves as cofactor.

CRISPR (clustered regularly interspaced short palindromic repeat), is an adaptive immune system that provides protection against mobile genetic elements (viruses, transposable elements and conjugative plasmids). CRISPR clusters contain sequences complementary to antecedent mobile elements and target invading nucleic acids. CRISPR clusters are transcribed and processed into CRISPR RNA (crRNA). Cas3 plus Cascade participate in CRISPR interference, the third stage of CRISPR immunity. Its function is as follows. Acts as an endonuclease, a 3'-5'exonuclease, and an ATP-dependent dsDNA helicase. Anneals and unwinds R-loops (in which crRNA binds the target DNA, displacing the noncomplementary strand). Unwinding requires ATP, annealing does not. Required along with the Cascade complex for resistance to bacteriophage lambda infection as well as the ability to cure CRISPR-encoding high-copy number plasmid. A Cas3-CasA fusion protein purified with the Cascade complex nicks target plasmid in the presence but not absence of Mg(2+), and degrades plasmid fully in the presence of Mg(2+) and ATP, suggesting the helicase activity is required for complete degradation. The protein is CRISPR-associated endonuclease/helicase Cas3 (ygcB) of Escherichia coli (strain K12).